Here is a 330-residue protein sequence, read N- to C-terminus: Phosphate acyltransferase (330 aa).

It belongs to the PlsX family. Homodimer. Probably interacts with PlsY.

The protein resides in the cytoplasm. It carries out the reaction a fatty acyl-[ACP] + phosphate = an acyl phosphate + holo-[ACP]. Its pathway is lipid metabolism; phospholipid metabolism. Functionally, catalyzes the reversible formation of acyl-phosphate (acyl-PO(4)) from acyl-[acyl-carrier-protein] (acyl-ACP). This enzyme utilizes acyl-ACP as fatty acyl donor, but not acyl-CoA. This is Phosphate acyltransferase from Lactobacillus delbrueckii subsp. bulgaricus (strain ATCC BAA-365 / Lb-18).